Reading from the N-terminus, the 335-residue chain is Beta-hexosaminidase (335 aa).

Substrate-binding positions include D60, R68, R133, and 163-164 (KH). The Proton donor/acceptor role is filled by H176. D247 (nucleophile) is an active-site residue.

Belongs to the glycosyl hydrolase 3 family. NagZ subfamily. As to quaternary structure, monomer.

It is found in the cytoplasm. It catalyses the reaction Hydrolysis of terminal non-reducing N-acetyl-D-hexosamine residues in N-acetyl-beta-D-hexosaminides.. It participates in cell wall biogenesis; peptidoglycan recycling. Functionally, plays a role in peptidoglycan recycling by cleaving the terminal beta-1,4-linked N-acetylglucosamine (GlcNAc) from peptide-linked peptidoglycan fragments, giving rise to free GlcNAc, anhydro-N-acetylmuramic acid and anhydro-N-acetylmuramic acid-linked peptides. This Xylella fastidiosa (strain 9a5c) protein is Beta-hexosaminidase.